Here is a 666-residue protein sequence, read N- to C-terminus: Putative cysteine-rich receptor-like protein kinase 20 (666 aa).

Positions 1-23 are cleaved as a signal peptide; it reads MSSLICFIFLFLFSFITSFTASA. Residues 24–264 are Extracellular-facing; sequence QNPFYLYHNC…PRPGKGGNSS (241 aa). 2 consecutive Gnk2-homologous domains span residues 27–131 and 137–241; these read FYLY…NRNI and TDGG…NYEF. N-linked (GlcNAc...) asparagine glycosylation is found at Asn-32, Asn-42, Asn-60, Asn-69, and Asn-103. N-linked (GlcNAc...) asparagine glycosylation occurs at Asn-262. A helical membrane pass occupies residues 265-285; it reads VIVIAVVVPITVLFLLFVAFF. Topologically, residues 286–666 are cytoplasmic; the sequence is SVRRAKRKKT…EASITSVAPR (381 aa). The 280-residue stretch at 344–623 folds into the Protein kinase domain; the sequence is FLPINKLGQG…QMLTTSSIAL (280 aa). Residues 350 to 358 and Lys-372 each bind ATP; that span reads LGQGGFGEV. The residue at position 417 (Tyr-417) is a Phosphotyrosine. Asp-469 serves as the catalytic Proton acceptor. Thr-509 carries the phosphothreonine modification. The residue at position 517 (Tyr-517) is a Phosphotyrosine.

It belongs to the protein kinase superfamily. Ser/Thr protein kinase family. CRK subfamily.

It is found in the membrane. It catalyses the reaction L-seryl-[protein] + ATP = O-phospho-L-seryl-[protein] + ADP + H(+). The catalysed reaction is L-threonyl-[protein] + ATP = O-phospho-L-threonyl-[protein] + ADP + H(+). This Arabidopsis thaliana (Mouse-ear cress) protein is Putative cysteine-rich receptor-like protein kinase 20 (CRK20).